The following is a 506-amino-acid chain: Trans-cinnamate 4-monooxygenase (506 aa).

Residues 3–23 traverse the membrane as a helical segment; it reads LLLLEKTLLALFIAATIAVTI. (E)-cinnamate-binding positions include 213-218 and A307; that span reads RSRLAQ. A heme-binding site is contributed by C448.

The protein belongs to the cytochrome P450 family. Heme is required as a cofactor.

It is found in the membrane. It catalyses the reaction (E)-cinnamate + reduced [NADPH--hemoprotein reductase] + O2 = (E)-4-coumarate + oxidized [NADPH--hemoprotein reductase] + H2O + H(+). It participates in phenylpropanoid metabolism; trans-4-coumarate biosynthesis; trans-4-coumarate from trans-cinnamate: step 1/1. Catalyzes the first oxidative step of the phenylpropanoid pathway in higher plants by transforming trans-cinnamate into p-coumarate. The compounds formed by this pathway are essential components for lignification, pollination, and defense against ultraviolet light, predators and pathogens. This is Trans-cinnamate 4-monooxygenase (CYP73A3) from Medicago sativa (Alfalfa).